We begin with the raw amino-acid sequence, 474 residues long: tRNA-2-methylthio-N(6)-dimethylallyladenosine synthase (474 aa).

The 118-residue stretch at 3 to 120 folds into the MTTase N-terminal domain; the sequence is KKLYIKTFGC…LPQMISTRQI (118 aa). Cys-12, Cys-49, Cys-83, Cys-157, Cys-161, and Cys-164 together coordinate [4Fe-4S] cluster. The Radical SAM core domain occupies 143–382; it reads RTEGVTAFVS…ELQAQAISVR (240 aa). One can recognise a TRAM domain in the interval 381–444; the sequence is VRMVGTTQRV…SHTLRGENVR (64 aa).

This sequence belongs to the methylthiotransferase family. MiaB subfamily. As to quaternary structure, monomer. [4Fe-4S] cluster serves as cofactor.

The protein resides in the cytoplasm. It carries out the reaction N(6)-dimethylallyladenosine(37) in tRNA + (sulfur carrier)-SH + AH2 + 2 S-adenosyl-L-methionine = 2-methylsulfanyl-N(6)-dimethylallyladenosine(37) in tRNA + (sulfur carrier)-H + 5'-deoxyadenosine + L-methionine + A + S-adenosyl-L-homocysteine + 2 H(+). Its function is as follows. Catalyzes the methylthiolation of N6-(dimethylallyl)adenosine (i(6)A), leading to the formation of 2-methylthio-N6-(dimethylallyl)adenosine (ms(2)i(6)A) at position 37 in tRNAs that read codons beginning with uridine. The polypeptide is tRNA-2-methylthio-N(6)-dimethylallyladenosine synthase (Nitrosospira multiformis (strain ATCC 25196 / NCIMB 11849 / C 71)).